A 396-amino-acid chain; its full sequence is Elongation factor Tu (396 aa).

The tr-type G domain maps to 10–206 (KPHVNIGTIG…AVDAYIPEPE (197 aa)). The tract at residues 19–26 (GHVDHGKT) is G1. Position 19–26 (19–26 (GHVDHGKT)) interacts with GTP. Threonine 26 provides a ligand contact to Mg(2+). Residues 60–64 (GITIA) are G2. A G3 region spans residues 81–84 (DCPG). GTP-binding positions include 81 to 85 (DCPGH) and 136 to 139 (NKAD). Positions 136–139 (NKAD) are G4. Residues 174 to 176 (SAL) are G5.

Belongs to the TRAFAC class translation factor GTPase superfamily. Classic translation factor GTPase family. EF-Tu/EF-1A subfamily. In terms of assembly, monomer.

The protein localises to the cytoplasm. It catalyses the reaction GTP + H2O = GDP + phosphate + H(+). Functionally, GTP hydrolase that promotes the GTP-dependent binding of aminoacyl-tRNA to the A-site of ribosomes during protein biosynthesis. In Geobacter metallireducens (strain ATCC 53774 / DSM 7210 / GS-15), this protein is Elongation factor Tu.